The sequence spans 339 residues: DNA-directed RNA polymerase subunit alpha (339 aa).

The interval 1–235 (MVIQKNWQEL…DQLQIFVNFE (235 aa)) is alpha N-terminal domain (alpha-NTD). An alpha C-terminal domain (alpha-CTD) region spans residues 251-339 (FNPALLKKVD…DLAKRFEEHY (89 aa)).

It belongs to the RNA polymerase alpha chain family. As to quaternary structure, homodimer. The RNAP catalytic core consists of 2 alpha, 1 beta, 1 beta' and 1 omega subunit. When a sigma factor is associated with the core the holoenzyme is formed, which can initiate transcription.

It catalyses the reaction RNA(n) + a ribonucleoside 5'-triphosphate = RNA(n+1) + diphosphate. Functionally, DNA-dependent RNA polymerase catalyzes the transcription of DNA into RNA using the four ribonucleoside triphosphates as substrates. The sequence is that of DNA-directed RNA polymerase subunit alpha from Methylobacterium nodulans (strain LMG 21967 / CNCM I-2342 / ORS 2060).